The sequence spans 362 residues: Peptide chain release factor 1 (362 aa).

Residue Q237 is modified to N5-methylglutamine. The segment covering 284 to 295 (EEEKRQAEETST) has biased composition (basic and acidic residues). The tract at residues 284–304 (EEEKRQAEETSTRRNLVASGD) is disordered.

The protein belongs to the prokaryotic/mitochondrial release factor family. In terms of processing, methylated by PrmC. Methylation increases the termination efficiency of RF1.

It is found in the cytoplasm. Its function is as follows. Peptide chain release factor 1 directs the termination of translation in response to the peptide chain termination codons UAG and UAA. In Pseudoalteromonas atlantica (strain T6c / ATCC BAA-1087), this protein is Peptide chain release factor 1.